Reading from the N-terminus, the 156-residue chain is Ribosomal RNA large subunit methyltransferase H (156 aa).

Residues leucine 72 and glycine 104 each contribute to the S-adenosyl-L-methionine site.

It belongs to the RNA methyltransferase RlmH family. In terms of assembly, homodimer.

It localises to the cytoplasm. The enzyme catalyses pseudouridine(1915) in 23S rRNA + S-adenosyl-L-methionine = N(3)-methylpseudouridine(1915) in 23S rRNA + S-adenosyl-L-homocysteine + H(+). Functionally, specifically methylates the pseudouridine at position 1915 (m3Psi1915) in 23S rRNA. This is Ribosomal RNA large subunit methyltransferase H from Maricaulis maris (strain MCS10) (Caulobacter maris).